Consider the following 184-residue polypeptide: Endoribonuclease YbeY (184 aa).

Composition is skewed to acidic residues over residues methionine 1–proline 11 and aspartate 19–aspartate 29. Residues methionine 1–aspartate 38 are disordered. 3 residues coordinate Zn(2+): histidine 146, histidine 150, and histidine 156.

Belongs to the endoribonuclease YbeY family. The cofactor is Zn(2+).

It is found in the cytoplasm. Its function is as follows. Single strand-specific metallo-endoribonuclease involved in late-stage 70S ribosome quality control and in maturation of the 3' terminus of the 16S rRNA. The sequence is that of Endoribonuclease YbeY from Burkholderia pseudomallei (strain K96243).